Reading from the N-terminus, the 124-residue chain is MARLVGVDLPRDKRMEIALTYIYGVGRTRSNEILAATGIDRDLRTRDLTDDQLTHLRDYIEANLKVEGDLRREVQADIRRKIEIGCYQGLRHRRGLPVRGQRTKTNARTRKGPKRTIAGKKKAR.

Positions 95–124 (GLPVRGQRTKTNARTRKGPKRTIAGKKKAR) are disordered.

This sequence belongs to the universal ribosomal protein uS13 family. Part of the 30S ribosomal subunit. Forms a loose heterodimer with protein S19. Forms two bridges to the 50S subunit in the 70S ribosome.

Located at the top of the head of the 30S subunit, it contacts several helices of the 16S rRNA. In the 70S ribosome it contacts the 23S rRNA (bridge B1a) and protein L5 of the 50S subunit (bridge B1b), connecting the 2 subunits; these bridges are implicated in subunit movement. Contacts the tRNAs in the A and P-sites. In Mycobacterium avium (strain 104), this protein is Small ribosomal subunit protein uS13.